The following is a 188-amino-acid chain: Elongation factor P (188 aa).

The protein belongs to the elongation factor P family.

The protein localises to the cytoplasm. The protein operates within protein biosynthesis; polypeptide chain elongation. Functionally, involved in peptide bond synthesis. Stimulates efficient translation and peptide-bond synthesis on native or reconstituted 70S ribosomes in vitro. Probably functions indirectly by altering the affinity of the ribosome for aminoacyl-tRNA, thus increasing their reactivity as acceptors for peptidyl transferase. The sequence is that of Elongation factor P from Malacoplasma penetrans (strain HF-2) (Mycoplasma penetrans).